Reading from the N-terminus, the 1349-residue chain is Protein strawberry notch homolog 2 (1349 aa).

3 disordered regions span residues 170–212 (YQSH…QHPD), 609–633 (STRRRRDRGGGKRKRRPRGRGPKAS), and 1319–1349 (PTETPAPLVGVGGGGTERQSVIHFSPPFPNS). The span at 177 to 188 (EEEEGEEEEETE) shows a compositional bias: acidic residues. Residues 609–631 (STRRRRDRGGGKRKRRPRGRGPK) are compositionally biased toward basic residues.

The protein belongs to the SBNO family. As to quaternary structure, interacts with TAL1; this interaction inhibits TAL1 occupancy of the DCSTAMP promoter, leading to the activation of the DCSTAMP promoter by the transcription factor MITF. In terms of tissue distribution, expressed in the spleen and bone marrow, and to a lesser extent in the kidney, liver, brain, skin, heart and muscle. Expressed predominantly in osteoclasts, and to a lesser extent in T-cells, B-cells and osteoblasts. Expressed in macrophages.

Acts as a transcriptional coregulator, that can have both coactivator and corepressor functions. Inhibits the DCSTAMP-repressive activity of TAL1, hence enhancing the access of the transcription factor MITF to the DC-STAMP promoter in osteoclast. Plays a role in bone homeostasis; required as a positive regulator in TNFSF11//RANKL-mediated osteoclast fusion via a DCSTAMP-dependent pathway. May also be required in the regulation of osteoblast differentiation. Involved in the transcriptional corepression of NF-kappaB in macrophages. Plays a role as a regulator in the pro-inflammatory cascade. This is Protein strawberry notch homolog 2 (Sbno2) from Mus musculus (Mouse).